The chain runs to 195 residues: Adenylate kinase (195 aa).

8–16 (GIPGVGKTT) provides a ligand contact to ATP.

The protein belongs to the archaeal adenylate kinase family. Homotrimer.

Its subcellular location is the cytoplasm. It catalyses the reaction AMP + ATP = 2 ADP. The chain is Adenylate kinase (adkA) from Saccharolobus solfataricus (strain ATCC 35092 / DSM 1617 / JCM 11322 / P2) (Sulfolobus solfataricus).